The following is a 206-amino-acid chain: dITP/XTP pyrophosphatase (206 aa).

7 to 12 is a substrate binding site; sequence SSHGYK. Asp-70 serves as the catalytic Proton acceptor. Asp-70 is a Mg(2+) binding site. Residues Thr-71, 154 to 157, Lys-177, and 182 to 183 contribute to the substrate site; these read FGYD and HR.

It belongs to the HAM1 NTPase family. Homodimer. Mg(2+) is required as a cofactor.

It carries out the reaction XTP + H2O = XMP + diphosphate + H(+). The catalysed reaction is dITP + H2O = dIMP + diphosphate + H(+). The enzyme catalyses ITP + H2O = IMP + diphosphate + H(+). Functionally, pyrophosphatase that catalyzes the hydrolysis of nucleoside triphosphates to their monophosphate derivatives, with a high preference for the non-canonical purine nucleotides XTP (xanthosine triphosphate), dITP (deoxyinosine triphosphate) and ITP. Seems to function as a house-cleaning enzyme that removes non-canonical purine nucleotides from the nucleotide pool, thus preventing their incorporation into DNA/RNA and avoiding chromosomal lesions. This Chlamydia abortus (strain DSM 27085 / S26/3) (Chlamydophila abortus) protein is dITP/XTP pyrophosphatase.